A 352-amino-acid polypeptide reads, in one-letter code: tRNA(Ile)-lysidine synthase (352 aa).

Residue 58 to 63 participates in ATP binding; sequence SGGADS.

It belongs to the tRNA(Ile)-lysidine synthase family.

The protein resides in the cytoplasm. It carries out the reaction cytidine(34) in tRNA(Ile2) + L-lysine + ATP = lysidine(34) in tRNA(Ile2) + AMP + diphosphate + H(+). Functionally, ligates lysine onto the cytidine present at position 34 of the AUA codon-specific tRNA(Ile) that contains the anticodon CAU, in an ATP-dependent manner. Cytidine is converted to lysidine, thus changing the amino acid specificity of the tRNA from methionine to isoleucine. The sequence is that of tRNA(Ile)-lysidine synthase from Streptomyces coelicolor (strain ATCC BAA-471 / A3(2) / M145).